A 132-amino-acid chain; its full sequence is Ribosome-binding factor A (132 aa).

This sequence belongs to the RbfA family. In terms of assembly, monomer. Binds 30S ribosomal subunits, but not 50S ribosomal subunits or 70S ribosomes.

It is found in the cytoplasm. Its function is as follows. One of several proteins that assist in the late maturation steps of the functional core of the 30S ribosomal subunit. Associates with free 30S ribosomal subunits (but not with 30S subunits that are part of 70S ribosomes or polysomes). Required for efficient processing of 16S rRNA. May interact with the 5'-terminal helix region of 16S rRNA. The sequence is that of Ribosome-binding factor A from Pseudomonas entomophila (strain L48).